The sequence spans 434 residues: UDP-N-acetylmuramate--L-alanine ligase (434 aa).

108 to 114 (GSHGKTT) contacts ATP.

It belongs to the MurCDEF family.

It localises to the cytoplasm. The catalysed reaction is UDP-N-acetyl-alpha-D-muramate + L-alanine + ATP = UDP-N-acetyl-alpha-D-muramoyl-L-alanine + ADP + phosphate + H(+). Its pathway is cell wall biogenesis; peptidoglycan biosynthesis. In terms of biological role, cell wall formation. The chain is UDP-N-acetylmuramate--L-alanine ligase from Geobacillus thermodenitrificans (strain NG80-2).